The primary structure comprises 1503 residues: Transient receptor potential cation channel subfamily M member 2 (1503 aa).

The interval 1-20 (MEPSALRKAGSEQEEGFEGL) is disordered. Over 1 to 752 (MEPSALRKAG…WWGQLSVDNG (752 aa)) the chain is Cytoplasmic. Positions 174, 179, 302, 333, and 336 each coordinate ADP-D-ribose. Phosphothreonine is present on threonine 740. Residues 753–769 (LWRVTLCMLAFPLLLTG) lie within the membrane without spanning it. Over 770–795 (LISFREKRLQDVGTPAARARAFFTAP) the chain is Cytoplasmic. Residues 796–816 (VVVFHLNILSYFAFLCLFAYV) form a helical membrane-spanning segment. Over 817 to 827 (LMVDFQPVPSW) the chain is Extracellular. A helical membrane pass occupies residues 828 to 848 (CECAIYLWLFSLVCEEMRQLF). 2 residues coordinate Ca(2+): glutamate 843 and glutamine 846. Residues 849–867 (YDPDECGLMKKAALYFSDF) are Cytoplasmic-facing. The chain crosses the membrane as a helical span at residues 868 to 888 (WNKLDVGAILLFVAGLTCRLI). Residue asparagine 869 participates in Ca(2+) binding. At 889–896 (PATLYPGR) the chain is on the extracellular side. A helical transmembrane segment spans residues 897–917 (VILSLDFILFCLRLMHIFTIS). The Cytoplasmic segment spans residues 918–929 (KTLGPKIIIVKR). The chain crosses the membrane as a helical span at residues 930-950 (MMKDVFFFLFLLAVWVVSFGV). Residues 951 to 970 (AKQAILIHNERRVDWLFRGA) lie on the Extracellular side of the membrane. Residues 971–985 (VYHSYLTIFGQIPGY) constitute an intramembrane region (pore-forming). The Selectivity filter signature appears at 979-982 (FGQI). Residues 986–1022 (IDGVNFNPEHCSPNGTDPYKPKCPESDATQQRPAFPE) lie on the Extracellular side of the membrane. Cysteine 996 and cysteine 1008 are disulfide-bonded. A helical membrane pass occupies residues 1023–1044 (WLTVLLLCLYLLFTNILLLNLL). Topologically, residues 1045–1079 (IAMFNYTFQQVQEHTDQIWKFQRHDLIEEYHGRPA) are cytoplasmic. Glutamate 1073 provides a ligand contact to Ca(2+). An intramembrane segment occupies 1080 to 1098 (APPPFILLSHLQLFIKRVV). The Cytoplasmic segment spans residues 1099–1503 (LKTPAKRHKQ…KAAAEFGAHY (405 aa)). Residues 1206-1237 (EADVPTLASQKAAEEPDAEPGGRKKTEEPGDS) form a disordered region. One can recognise a Nudix hydrolase domain in the interval 1354 to 1498 (RWRRNEDGAI…KTLLQKAAAE (145 aa)). Leucine 1381 and serine 1382 together coordinate ADP-D-ribose. The Nudix box signature appears at 1390–1411 (GSREPGEMLPRKLKRILRQEHW). The ADP-D-ribose site is built by aspartate 1431, arginine 1433, tyrosine 1485, and asparagine 1487.

This sequence belongs to the transient receptor (TC 1.A.4) family. LTrpC subfamily. TRPM2 sub-subfamily. In terms of assembly, homotetramer. Isoform 1 can interact with isoform 3. This interaction decreases Ca(2+) influx through isoform 1 and suppresses susceptibility to oxidative stress-induced cell death. Phosphorylation of TRPM2 at Thr-740 by protein kinase C (PKC) counteracts the effect of cytosolic Ca(2+) and elevates the temperature threshold. Highly expressed in brain and peripheral blood cells, such as neutrophils. Also detected in bone marrow, spleen, heart, liver and lung. Isoform 2 is found in neutrophil granulocytes.

The protein localises to the cell membrane. It is found in the perikaryon. It localises to the cell projection. Its subcellular location is the cytoplasmic vesicle. The protein resides in the lysosome. The catalysed reaction is Ca(2+)(in) = Ca(2+)(out). It carries out the reaction Na(+)(in) = Na(+)(out). With respect to regulation, activated by intracellular ADP-ribose, beta-NAD (NAD(+)) and similar compounds, and by oxidative stress caused by reactive oxygen or nitrogen species. Ca(2+) and PI(4,5)P2 are required for channel opening by ADP-ribose. Activation by ADP-ribose and beta-NAD is strongly increased by moderate heat (35 to 40 degrees Celsius). Likewise, reactive oxygen species lower the threshold for activation by moderate heat (37 degrees Celsius). Activated by moderate heat (35 to 40 degrees Celsius). Inactivated by exposure to extracellular pH between 4.0 and 6.5; irreversibly inactivated when open channels are exposed to extracellular pH between 4.0 and 6.5, while pre-exposure of closed channels to extracellular pH 5.5 gives rise to currents that rapidly inactivate, but protects against irreversible inactivation. Inactivated by intracellular ATP. Activated by arachidonic acid. Inhibited by 2-aminoethyl diphenylborinate (2-APB). Nonselective, voltage-independent cation channel that mediates Na(+) and Ca(2+) influx, leading to increased cytoplasmic Ca(2+) levels. Functions as a ligand-gated ion channel, gated by intracellular adenosine diphosphate ribose (ADP-ribose), Ca(2+), warm temperature, and oxidative stress. The precise physiological activators are under debate; the true, physiological activators may be ADP-ribose and ADP-ribose-2'-phosphate. Binding of ADP-ribose to the cytoplasmic Nudix domain causes a conformation change; the channel is primed but still requires Ca(2+) binding to trigger channel opening. Extracellular Ca(2+) passes through the channel and increases channel activity. Contributes to Ca(2+) release from intracellular stores in response to ADP-ribose. Plays a role in numerous processes that involve signaling via intracellular Ca(2+) levels. Besides, mediates the release of lysosomal Zn(2+) stores in response to reactive oxygen species, leading to increased cytosolic Zn(2+) levels. Plays a role in mediating behavorial and physiological responses to moderate heat and thereby contributes to body temperature homeostasis. Plays a role in insulin secretion, a process that requires increased cytoplasmic Ca(2+) levels. Required for normal IFNG and cytokine secretion and normal innate immune immunity in response to bacterial infection. Required for normal phagocytosis and cytokine release by macrophages exposed to zymosan (in vitro). Plays a role in dendritic cell differentiation and maturation, and in dendritic cell chemotaxis via its role in regulating cytoplasmic Ca(2+) levels. Plays a role in the regulation of the reorganization of the actin cytoskeleton and filopodia formation in response to reactive oxygen species via its role in increasing cytoplasmic Ca(2+) and Zn(2+) levels. Confers susceptibility to cell death following oxidative stress. In terms of biological role, lacks cation channel activity. Does not mediate cation transport in response to oxidative stress or ADP-ribose. Functionally, lacks cation channel activity and negatively regulates the channel activity of isoform 1. Negatively regulates susceptibility to cell death in reposponse to oxidative stress. This is Transient receptor potential cation channel subfamily M member 2 (TRPM2) from Homo sapiens (Human).